The sequence spans 62 residues: Photosystem II reaction center protein Z (62 aa).

A run of 2 helical transmembrane segments spans residues 8 to 28 (AVFALIATSLILLISVPVVFA) and 41 to 61 (FSGTSLWIGLVFLVGILNSLI).

This sequence belongs to the PsbZ family. In terms of assembly, PSII is composed of 1 copy each of membrane proteins PsbA, PsbB, PsbC, PsbD, PsbE, PsbF, PsbH, PsbI, PsbJ, PsbK, PsbL, PsbM, PsbT, PsbY, PsbZ, Psb30/Ycf12, at least 3 peripheral proteins of the oxygen-evolving complex and a large number of cofactors. It forms dimeric complexes.

It is found in the plastid. The protein resides in the chloroplast thylakoid membrane. In terms of biological role, may control the interaction of photosystem II (PSII) cores with the light-harvesting antenna, regulates electron flow through the 2 photosystem reaction centers. PSII is a light-driven water plastoquinone oxidoreductase, using light energy to abstract electrons from H(2)O, generating a proton gradient subsequently used for ATP formation. This is Photosystem II reaction center protein Z from Nicotiana sylvestris (Wood tobacco).